The primary structure comprises 481 residues: ATP synthase subunit beta, chloroplastic (481 aa).

Gly162 to Thr169 contacts ATP.

It belongs to the ATPase alpha/beta chains family. As to quaternary structure, F-type ATPases have 2 components, CF(1) - the catalytic core - and CF(0) - the membrane proton channel. CF(1) has five subunits: alpha(3), beta(3), gamma(1), delta(1), epsilon(1). CF(0) has four main subunits: a(1), b(1), b'(1) and c(9-12).

The protein localises to the plastid. The protein resides in the chloroplast thylakoid membrane. It catalyses the reaction ATP + H2O + 4 H(+)(in) = ADP + phosphate + 5 H(+)(out). Functionally, produces ATP from ADP in the presence of a proton gradient across the membrane. The catalytic sites are hosted primarily by the beta subunits. The protein is ATP synthase subunit beta, chloroplastic of Chlorella vulgaris (Green alga).